The following is a 223-amino-acid chain: uncharacterized protein (223 aa).

This is an uncharacterized protein from Mycoplasma pneumoniae (strain ATCC 29342 / M129 / Subtype 1) (Mycoplasmoides pneumoniae).